Here is a 461-residue protein sequence, read N- to C-terminus: Cysteine--tRNA ligase (461 aa).

Cys28 lines the Zn(2+) pocket. The 'HIGH' region signature appears at 30 to 40 (ITVYDLCHIGH). Positions 209, 234, and 238 each coordinate Zn(2+). Residues 266 to 270 (KMSKS) carry the 'KMSKS' region motif. Lys269 contributes to the ATP binding site.

The protein belongs to the class-I aminoacyl-tRNA synthetase family. In terms of assembly, monomer. Requires Zn(2+) as cofactor.

It localises to the cytoplasm. The enzyme catalyses tRNA(Cys) + L-cysteine + ATP = L-cysteinyl-tRNA(Cys) + AMP + diphosphate. This is Cysteine--tRNA ligase from Pectobacterium carotovorum subsp. carotovorum (strain PC1).